A 114-amino-acid polypeptide reads, in one-letter code: UPF0342 protein OEOE_0901 (114 aa).

Belongs to the UPF0342 family.

The sequence is that of UPF0342 protein OEOE_0901 from Oenococcus oeni (strain ATCC BAA-331 / PSU-1).